The primary structure comprises 617 residues: Dihydroxy-acid dehydratase (617 aa).

Mg(2+) is bound at residue Asp-81. Position 122 (Cys-122) interacts with [2Fe-2S] cluster. The Mg(2+) site is built by Asp-123 and Lys-124. At Lys-124 the chain carries N6-carboxylysine. [2Fe-2S] cluster is bound at residue Cys-195. Residue Glu-491 coordinates Mg(2+). The Proton acceptor role is filled by Ser-517.

It belongs to the IlvD/Edd family. Homodimer. It depends on [2Fe-2S] cluster as a cofactor. Requires Mg(2+) as cofactor.

The catalysed reaction is (2R)-2,3-dihydroxy-3-methylbutanoate = 3-methyl-2-oxobutanoate + H2O. The enzyme catalyses (2R,3R)-2,3-dihydroxy-3-methylpentanoate = (S)-3-methyl-2-oxopentanoate + H2O. Its pathway is amino-acid biosynthesis; L-isoleucine biosynthesis; L-isoleucine from 2-oxobutanoate: step 3/4. It participates in amino-acid biosynthesis; L-valine biosynthesis; L-valine from pyruvate: step 3/4. Its function is as follows. Functions in the biosynthesis of branched-chain amino acids. Catalyzes the dehydration of (2R,3R)-2,3-dihydroxy-3-methylpentanoate (2,3-dihydroxy-3-methylvalerate) into 2-oxo-3-methylpentanoate (2-oxo-3-methylvalerate) and of (2R)-2,3-dihydroxy-3-methylbutanoate (2,3-dihydroxyisovalerate) into 2-oxo-3-methylbutanoate (2-oxoisovalerate), the penultimate precursor to L-isoleucine and L-valine, respectively. The sequence is that of Dihydroxy-acid dehydratase from Buchnera aphidicola subsp. Acyrthosiphon pisum (strain 5A).